The following is a 260-amino-acid chain: Indole-3-glycerol phosphate synthase (260 aa).

This sequence belongs to the TrpC family.

It carries out the reaction 1-(2-carboxyphenylamino)-1-deoxy-D-ribulose 5-phosphate + H(+) = (1S,2R)-1-C-(indol-3-yl)glycerol 3-phosphate + CO2 + H2O. Its pathway is amino-acid biosynthesis; L-tryptophan biosynthesis; L-tryptophan from chorismate: step 4/5. This chain is Indole-3-glycerol phosphate synthase, found in Lactiplantibacillus plantarum (strain ATCC BAA-793 / NCIMB 8826 / WCFS1) (Lactobacillus plantarum).